Here is a 66-residue protein sequence, read N- to C-terminus: Large ribosomal subunit protein bL35 (66 aa).

Belongs to the bacterial ribosomal protein bL35 family.

This chain is Large ribosomal subunit protein bL35, found in Borreliella burgdorferi (strain ATCC 35210 / DSM 4680 / CIP 102532 / B31) (Borrelia burgdorferi).